Consider the following 502-residue polypeptide: Cytochrome c-552 (502 aa).

The first 25 residues, 1–25 (MKYLTKSRVIATIAMLGCLSVSAWA), serve as a signal peptide directing secretion. Histidine 105 provides a ligand contact to heme c. Residues cysteine 133, cysteine 136, and lysine 137 each coordinate heme. Heme c is bound by residues cysteine 171, cysteine 174, histidine 175, cysteine 220, cysteine 223, and histidine 224. Ca(2+)-binding residues include glutamate 226, tyrosine 227, lysine 271, and glutamine 273. Tyrosine 227 is a binding site for substrate. Residue histidine 274 participates in substrate binding. 9 residues coordinate heme c: histidine 285, cysteine 292, cysteine 295, histidine 296, histidine 311, cysteine 324, cysteine 327, histidine 328, and histidine 403. Residues 481-502 (RERGLLPEVTPKSVTTPKVDAK) are disordered.

It belongs to the cytochrome c-552 family. The cofactor is Ca(2+). Requires heme c as cofactor.

Its subcellular location is the periplasm. It carries out the reaction 6 Fe(III)-[cytochrome c] + NH4(+) + 2 H2O = 6 Fe(II)-[cytochrome c] + nitrite + 8 H(+). It functions in the pathway nitrogen metabolism; nitrate reduction (assimilation). Functionally, catalyzes the reduction of nitrite to ammonia, consuming six electrons in the process. In Haemophilus ducreyi (strain 35000HP / ATCC 700724), this protein is Cytochrome c-552.